A 907-amino-acid chain; its full sequence is Protein translocase subunit SecA (907 aa).

ATP is bound by residues glutamine 87, 105–109 (GEGKT), and aspartate 512. Positions 834 to 907 (QSDVDDMEQR…KYKQCHGKLS (74 aa)) are disordered. A compositionally biased stretch (basic and acidic residues) spans 840–856 (MEQRRREEEAKIQRDYQ). Over residues 865–876 (DESQASSDNTPK) the composition is skewed to polar residues. The span at 878-887 (MIREGDKVGR) shows a compositional bias: basic and acidic residues. Positions 891, 893, 902, and 903 each coordinate Zn(2+). Residues 897-907 (KKYKQCHGKLS) are compositionally biased toward basic residues.

It belongs to the SecA family. As to quaternary structure, monomer and homodimer. Part of the essential Sec protein translocation apparatus which comprises SecA, SecYEG and auxiliary proteins SecDF-YajC and YidC. Zn(2+) is required as a cofactor.

It localises to the cell inner membrane. It is found in the cytoplasm. The enzyme catalyses ATP + H2O + cellular proteinSide 1 = ADP + phosphate + cellular proteinSide 2.. In terms of biological role, part of the Sec protein translocase complex. Interacts with the SecYEG preprotein conducting channel. Has a central role in coupling the hydrolysis of ATP to the transfer of proteins into and across the cell membrane, serving both as a receptor for the preprotein-SecB complex and as an ATP-driven molecular motor driving the stepwise translocation of polypeptide chains across the membrane. This Shewanella denitrificans (strain OS217 / ATCC BAA-1090 / DSM 15013) protein is Protein translocase subunit SecA.